Reading from the N-terminus, the 62-residue chain is uncharacterized protein (62 aa).

Its subcellular location is the plastid. It is found in the chloroplast. This is an uncharacterized protein from Chlamydomonas reinhardtii (Chlamydomonas smithii).